We begin with the raw amino-acid sequence, 631 residues long: Phosphomethylpyrimidine synthase (631 aa).

Residues N239, M268, Y297, H333, 353–355, 394–397, and E433 contribute to the substrate site; these read SRG and DGLR. Zn(2+) is bound at residue H437. Residue Y460 participates in substrate binding. Zn(2+) is bound at residue H501. C581, C584, and C589 together coordinate [4Fe-4S] cluster.

The protein belongs to the ThiC family. In terms of assembly, homodimer. [4Fe-4S] cluster serves as cofactor.

It carries out the reaction 5-amino-1-(5-phospho-beta-D-ribosyl)imidazole + S-adenosyl-L-methionine = 4-amino-2-methyl-5-(phosphooxymethyl)pyrimidine + CO + 5'-deoxyadenosine + formate + L-methionine + 3 H(+). It participates in cofactor biosynthesis; thiamine diphosphate biosynthesis. Its function is as follows. Catalyzes the synthesis of the hydroxymethylpyrimidine phosphate (HMP-P) moiety of thiamine from aminoimidazole ribotide (AIR) in a radical S-adenosyl-L-methionine (SAM)-dependent reaction. The polypeptide is Phosphomethylpyrimidine synthase (Escherichia coli O157:H7).